The primary structure comprises 159 residues: Transcription antitermination protein NusB (159 aa).

Belongs to the NusB family.

In terms of biological role, involved in transcription antitermination. Required for transcription of ribosomal RNA (rRNA) genes. Binds specifically to the boxA antiterminator sequence of the ribosomal RNA (rrn) operons. This Xanthomonas axonopodis pv. citri (strain 306) protein is Transcription antitermination protein NusB.